Here is a 514-residue protein sequence, read N- to C-terminus: Adenylosuccinate synthetase 2, chloroplastic (514 aa).

The N-terminal 56 residues, 1-56 (MAMAAAAAVASQGLLATSSQQQKKSSAKLICNAATFFSGKRLLWVKSCNNGAVGLR), are a transit peptide targeting the chloroplast. GTP-binding positions include 100–106 (GDEGKGK) and 128–130 (GHT). Asp101 serves as the catalytic Proton acceptor. Residues Asp101 and Gly128 each coordinate Mg(2+). Residues 101-104 (DEGK), 126-129 (NAGH), Thr218, Arg232, Gln312, Thr327, and Arg391 contribute to the IMP site. Residue His129 is the Proton donor of the active site. Substrate is bound at residue 387–393 (TTTGRPR). GTP-binding positions include Arg393, 419 to 421 (KLD), and 502 to 504 (GVG).

It belongs to the adenylosuccinate synthetase family. Homodimer. Requires Mg(2+) as cofactor.

It is found in the plastid. It localises to the chloroplast. The catalysed reaction is IMP + L-aspartate + GTP = N(6)-(1,2-dicarboxyethyl)-AMP + GDP + phosphate + 2 H(+). It participates in purine metabolism; AMP biosynthesis via de novo pathway; AMP from IMP: step 1/2. In terms of biological role, plays an important role in the de novo pathway and in the salvage pathway of purine nucleotide biosynthesis. Catalyzes the first committed step in the biosynthesis of AMP from IMP. The sequence is that of Adenylosuccinate synthetase 2, chloroplastic from Physcomitrium patens (Spreading-leaved earth moss).